Consider the following 39-residue polypeptide: Omega-theraphotoxin-Ba1b (39 aa).

Cystine bridges form between Cys-4–Cys-17, Cys-8–Cys-31, and Cys-25–Cys-36.

It belongs to the neurotoxin 12 (Hwtx-2) family. 06 (TXP1) subfamily. As to expression, expressed by the venom gland.

Its subcellular location is the secreted. Functionally, inhibits voltage-gated calcium channels (Cav) in rat cerebellar granule cells. Has insecticidal activity to crickets (Acheta domesticus). Is not toxic to mice. The polypeptide is Omega-theraphotoxin-Ba1b (Brachypelma albiceps (Mexican golden redrump tarantula)).